The chain runs to 1568 residues: Kielin/chordin-like protein (1568 aa).

Residues 1–23 (MAGVGAAALSLLLHLGALALAAG) form the signal peptide. The segment at 27–49 (GAVPREPPGQQTTAHSSVLAGNS) is disordered. The segment covering 35–49 (GQQTTAHSSVLAGNS) has biased composition (polar residues). Positions 60–87 (LGRLEAAVMELREQNKDLQTRVRQLESC) form a coiled coil. 16 consecutive VWFC domains span residues 136-193 (RGCS…PICR), 194-253 (PGCD…PTCQ), 253-312 (QGCT…PVCD), 312-370 (DGCF…PVCD), 426-485 (PACE…PSCD), 485-544 (DSCT…PRCP), 544-602 (PDCI…NDCS), 602-661 (SGCA…PQCP), 667-725 (AGCP…PSCD), 725-782 (DGCL…PDCD), 782-841 (DGCE…PTCQ), 900-959 (HSCL…PRCR), 959-1017 (RGCL…PQCS), 1017-1085 (SDCE…PTCA), 1082-1145 (PTCA…PVCR), and 1149-1209 (QSCV…PRCL). Residue asparagine 340 is glycosylated (N-linked (GlcNAc...) asparagine). The N-linked (GlcNAc...) asparagine glycan is linked to asparagine 499. An N-linked (GlcNAc...) asparagine glycan is attached at asparagine 1090. The VWFD domain occupies 1213 to 1389 (ASCMAFGDPH…EGLWPGRPCS (177 aa)). Disulfide bonds link cysteine 1215/cysteine 1347 and cysteine 1237/cysteine 1388. In terms of domain architecture, TIL spans 1483 to 1543 (CPLERGFVFD…EAHCIPPEAC (61 aa)).

In terms of assembly, interacts with BMP7 and, by doing so, enhances binding to the type I receptors that contains cytoplasmic serine/threonine protein kinase domains. Also able to interact with activin-A and TGFB1.

It is found in the secreted. Functionally, enhances bone morphogenetic protein (BMP) signaling in a paracrine manner. In contrast, it inhibits both the activin-A and TGFB1-mediated signaling pathways. The polypeptide is Kielin/chordin-like protein (Homo sapiens (Human)).